The chain runs to 681 residues: Potassium-transporting ATPase ATP-binding subunit (681 aa).

4 helical membrane passes run 30–50, 59–79, 216–236, and 255–275; these read LLVY…FFGI, LAIA…EAIA, ILLV…LPFT, and IALL…SIGI. Asp-306 acts as the 4-aspartylphosphate intermediate in catalysis. Residues Asp-343, Glu-347, 376–383, and Lys-394 each bind ATP; that span reads FTATTRMS. Mg(2+) is bound by residues Asp-517 and Asp-521. 3 consecutive transmembrane segments (helical) span residues 587 to 607, 615 to 635, and 661 to 681; these read FAII…LNLM, AILS…PLSL, and LIAP…LGIV.

The protein belongs to the cation transport ATPase (P-type) (TC 3.A.3) family. Type IA subfamily. In terms of assembly, the system is composed of three essential subunits: KdpA, KdpB and KdpC.

The protein localises to the cell membrane. It carries out the reaction K(+)(out) + ATP + H2O = K(+)(in) + ADP + phosphate + H(+). Functionally, part of the high-affinity ATP-driven potassium transport (or Kdp) system, which catalyzes the hydrolysis of ATP coupled with the electrogenic transport of potassium into the cytoplasm. This subunit is responsible for energy coupling to the transport system and for the release of the potassium ions to the cytoplasm. This is Potassium-transporting ATPase ATP-binding subunit from Listeria monocytogenes serotype 4b (strain CLIP80459).